The primary structure comprises 512 residues: FACT complex subunit pob3 (512 aa).

Positions 460-504 (LDDEDEEGDEEMEEALSEDEDFQAESESDVAEEYDENAESSDEEG) are enriched in acidic residues. The tract at residues 460–512 (LDDEDEEGDEEMEEALSEDEDFQAESESDVAEEYDENAESSDEEGASGAEGSE) is disordered.

The protein belongs to the SSRP1 family. As to quaternary structure, forms a stable heterodimer with spt16. The spt16-pob3 dimer weakly associates with multiple molecules of nhp6 to form the FACT complex. Interacts with abo1.

It localises to the nucleus. The protein localises to the chromosome. In terms of biological role, component of the FACT complex, a general chromatin factor that acts to reorganize nucleosomes. The FACT complex is involved in multiple processes that require DNA as a template such as mRNA elongation, DNA replication and DNA repair. During transcription elongation the FACT complex acts as a histone chaperone that both destabilizes and restores nucleosomal structure. It facilitates the passage of RNA polymerase II and transcription by promoting the dissociation of one histone H2A-H2B dimer from the nucleosome, then subsequently promotes the reestablishment of the nucleosome following the passage of RNA polymerase II. The chain is FACT complex subunit pob3 from Schizosaccharomyces pombe (strain 972 / ATCC 24843) (Fission yeast).